The chain runs to 346 residues: Phenylalanine--tRNA ligase alpha subunit (346 aa).

Residue Glu260 participates in Mg(2+) binding.

Belongs to the class-II aminoacyl-tRNA synthetase family. Phe-tRNA synthetase alpha subunit type 1 subfamily. As to quaternary structure, tetramer of two alpha and two beta subunits. Mg(2+) serves as cofactor.

It is found in the cytoplasm. It carries out the reaction tRNA(Phe) + L-phenylalanine + ATP = L-phenylalanyl-tRNA(Phe) + AMP + diphosphate + H(+). The protein is Phenylalanine--tRNA ligase alpha subunit of Herpetosiphon aurantiacus (strain ATCC 23779 / DSM 785 / 114-95).